Here is a 315-residue protein sequence, read N- to C-terminus: MITSFYAFLDYLKNMKASSLHTLRNYCMDLSSLKCFLEKKSDLSPTPPLSLHDNTYDYPPLSFSLFTKDNIRLYLLEQIQTHHSKRTVRRRLSAIKSFARFCVKNQLIPENPAEMIRGPRLPQELPSPLTYEQVLALMAAPELDKVTGFRDRCLLELFYSSGLRISEITALNRADIDFQSHLLHIRGKGKKERIVPMTKVAVQWLQDYLNHPDRASVEQDHQACFLNRFGKRLSTRSIDRKFQQYLLKTGLSGSITPHTIRHTIATHWLERGMDLKTIQLLLGHTSLETTTIYTHVSMKLKKQIHDETHPHNLEE.

Positions 1–103 (MITSFYAFLD…AIKSFARFCV (103 aa)) constitute a Core-binding (CB) domain. The 183-residue stretch at 124 to 306 (ELPSPLTYEQ…SMKLKKQIHD (183 aa)) folds into the Tyr recombinase domain. Residues R164, K188, H258, R261, and H284 contribute to the active site. Residue Y293 is the O-(3'-phospho-DNA)-tyrosine intermediate of the active site.

It belongs to the 'phage' integrase family. XerC subfamily. As to quaternary structure, forms a cyclic heterotetrameric complex composed of two molecules of XerC and two molecules of XerD.

It is found in the cytoplasm. Its function is as follows. Site-specific tyrosine recombinase, which acts by catalyzing the cutting and rejoining of the recombining DNA molecules. The XerC-XerD complex is essential to convert dimers of the bacterial chromosome into monomers to permit their segregation at cell division. It also contributes to the segregational stability of plasmids. The sequence is that of Tyrosine recombinase XerC from Chlamydia trachomatis serovar L2b (strain UCH-1/proctitis).